The following is an 836-amino-acid chain: uncharacterized protein (836 aa).

Disordered stretches follow at residues 1–25, 692–718, and 789–836; these read MDST…NEEE, DSRS…NNQR, and ESSG…GYAS. Polar residues-rich tracts occupy residues 789–799 and 825–836; these read ESSGINVSNTR and IDSSSAQNGYAS.

The protein resides in the nucleus. This is an uncharacterized protein from Schizosaccharomyces pombe (strain 972 / ATCC 24843) (Fission yeast).